Consider the following 1506-residue polypeptide: ABC transporter C family member 9 (1506 aa).

The next 11 membrane-spanning stretches (helical) occupy residues 37–57, 84–104, 116–136, 150–170, 179–199, 315–335, 350–370, 427–447, 452–472, 541–561, and 567–587; these read MQVT…FGVV, ISLL…LLLF, VSVF…SVVV, MLRS…AHFI, FQDY…AVSI, AINA…PYLI, LNHG…ETVT, FIWY…AIYI, LGLG…CNYP, FILW…CMLM, and AGAV…IFGL. The 283-residue stretch at 314–596 folds into the ABC transmembrane type-1 1 domain; sequence AAINAVFAVV…LPDLLSALVQ (283 aa). In terms of domain architecture, ABC transporter 1 spans 630-853; that stretch reads VEIENGAFSW…NIGFEVLVGA (224 aa). 665–672 provides a ligand contact to ATP; sequence GAVGSGKS. Transmembrane regions (helical) follow at residues 934–956, 976–996, 1048–1068, 1167–1187, and 1191–1211; these read LLVP…SNYW, ILLV…ARTI, MAVK…TIFV, LSHF…EGVI, and IAGL…TVIW. Residues 936–1218 enclose the ABC transmembrane type-1 2 domain; it reads VPFIILAQSC…VIWNICNAEN (283 aa). The ABC transporter 2 domain maps to 1257 to 1489; it reads FRDLQVRYAE…EDSFFSKLIK (233 aa). 1289–1296 contributes to the ATP binding site; it reads GRTGSGKS.

The protein belongs to the ABC transporter superfamily. ABCC family. Conjugate transporter (TC 3.A.1.208) subfamily. In terms of tissue distribution, ubiquitous.

Its subcellular location is the membrane. The enzyme catalyses ATP + H2O + xenobioticSide 1 = ADP + phosphate + xenobioticSide 2.. In terms of biological role, pump for glutathione S-conjugates. The chain is ABC transporter C family member 9 (ABCC9) from Arabidopsis thaliana (Mouse-ear cress).